Consider the following 187-residue polypeptide: Large ribosomal subunit protein uL5 (187 aa).

The protein belongs to the universal ribosomal protein uL5 family. As to quaternary structure, part of the 50S ribosomal subunit; part of the 5S rRNA/L5/L18/L25 subcomplex. Contacts the 5S rRNA and the P site tRNA. Forms a bridge to the 30S subunit in the 70S ribosome.

In terms of biological role, this is one of the proteins that bind and probably mediate the attachment of the 5S RNA into the large ribosomal subunit, where it forms part of the central protuberance. In the 70S ribosome it contacts protein S13 of the 30S subunit (bridge B1b), connecting the 2 subunits; this bridge is implicated in subunit movement. Contacts the P site tRNA; the 5S rRNA and some of its associated proteins might help stabilize positioning of ribosome-bound tRNAs. This chain is Large ribosomal subunit protein uL5, found in Brachyspira hyodysenteriae (strain ATCC 49526 / WA1).